A 441-amino-acid polypeptide reads, in one-letter code: Ribosomal protein uS12 methylthiotransferase RimO (441 aa).

In terms of domain architecture, MTTase N-terminal spans 6–116 (PKVGFVSLGC…VMTAVHANLP (111 aa)). 6 residues coordinate [4Fe-4S] cluster: C15, C51, C80, C147, C151, and C154. The region spanning 133–370 (LTPQHYAYLK…MEVQESISAE (238 aa)) is the Radical SAM core domain. One can recognise a TRAM domain in the interval 373–439 (RRKIGRIETV…GHDLWAAPPA (67 aa)).

It belongs to the methylthiotransferase family. RimO subfamily. [4Fe-4S] cluster is required as a cofactor.

The protein localises to the cytoplasm. The catalysed reaction is L-aspartate(89)-[ribosomal protein uS12]-hydrogen + (sulfur carrier)-SH + AH2 + 2 S-adenosyl-L-methionine = 3-methylsulfanyl-L-aspartate(89)-[ribosomal protein uS12]-hydrogen + (sulfur carrier)-H + 5'-deoxyadenosine + L-methionine + A + S-adenosyl-L-homocysteine + 2 H(+). Functionally, catalyzes the methylthiolation of an aspartic acid residue of ribosomal protein uS12. The sequence is that of Ribosomal protein uS12 methylthiotransferase RimO from Methylobacillus flagellatus (strain ATCC 51484 / DSM 6875 / VKM B-1610 / KT).